We begin with the raw amino-acid sequence, 178 residues long: Photosystem II extrinsic protein V (178 aa).

Residues 1 to 38 (MFSKFFSLQKAFAAARRRLLILILVLGMAGYAWGPALA) form the signal peptide. Residues Cys-71, Cys-74, His-75, and His-126 each coordinate heme c.

This sequence belongs to the cytochrome c family. PsbV subfamily. In terms of assembly, PSII is composed of 1 copy each of membrane proteins PsbA, PsbB, PsbC, PsbD, PsbE, PsbF, PsbH, PsbI, PsbJ, PsbK, PsbL, PsbM, PsbT, PsbX, PsbY, PsbZ, Psb30/Ycf12, peripheral proteins PsbO, CyanoQ (PsbQ), PsbU, PsbV and a large number of cofactors. It forms dimeric complexes. Heme c is required as a cofactor.

It is found in the cellular thylakoid membrane. In terms of biological role, one of the extrinsic, lumenal subunits of photosystem II (PSII). PSII is a light-driven water plastoquinone oxidoreductase, using light energy to abstract electrons from H(2)O, generating a proton gradient subsequently used for ATP formation. The extrinsic proteins stabilize the structure of photosystem II oxygen-evolving complex (OEC), the ion environment of oxygen evolution and protect the OEC against heat-induced inactivation. Low-potential cytochrome c that plays a role in the OEC of PSII. The protein is Photosystem II extrinsic protein V of Synechococcus sp. (strain JA-3-3Ab) (Cyanobacteria bacterium Yellowstone A-Prime).